We begin with the raw amino-acid sequence, 20 residues long: Pregnancy-associated glycoprotein 67A (20 aa).

N-linked (GlcNAc...) asparagine glycosylation is found at Asn4 and Asn20.

It belongs to the peptidase A1 family. In terms of tissue distribution, chorionic epithelium (trophectoderm) and placental cotyledons.

The protein resides in the secreted. It is found in the extracellular space. The sequence is that of Pregnancy-associated glycoprotein 67A from Bison bonasus (European bison).